A 499-amino-acid polypeptide reads, in one-letter code: Glycerol kinase (499 aa).

Position 17 (Thr-17) interacts with ADP. ATP is bound by residues Thr-17, Thr-18, and Ser-19. Sn-glycerol 3-phosphate is bound at residue Thr-17. Arg-21 provides a ligand contact to ADP. Positions 87, 88, 139, and 243 each coordinate sn-glycerol 3-phosphate. Glycerol is bound by residues Arg-87, Glu-88, Tyr-139, Asp-243, and Gln-244. Positions 265 and 308 each coordinate ADP. Residues Thr-265, Gly-308, Gln-312, and Gly-409 each coordinate ATP. Gly-409 and Asn-413 together coordinate ADP.

This sequence belongs to the FGGY kinase family.

It carries out the reaction glycerol + ATP = sn-glycerol 3-phosphate + ADP + H(+). Its pathway is polyol metabolism; glycerol degradation via glycerol kinase pathway; sn-glycerol 3-phosphate from glycerol: step 1/1. Its activity is regulated as follows. Inhibited by fructose 1,6-bisphosphate (FBP). Key enzyme in the regulation of glycerol uptake and metabolism. Catalyzes the phosphorylation of glycerol to yield sn-glycerol 3-phosphate. The sequence is that of Glycerol kinase from Pseudomonas entomophila (strain L48).